A 104-amino-acid chain; its full sequence is ESAT-6-like protein (104 aa).

A coiled-coil region spans residues 12 to 43 (MAQAAQDIEQSANAIRGMQNQLASAKDQLRSH).

Belongs to the WXG100 family. CFP-10 subfamily. In terms of assembly, in isolation forms a homodimer. Forms a tight 1:1 complex with EsxA. Forms a complex with EsxA and EccC, probably wholly mediated by EsxB; binds in a pocket in the third FtsK (ATPase) domain of EccC (residues 1163-1208).

It localises to the secreted. Functionally, may help regulate assembly and function of the type VII secretion system (T7SS). Binds to EccC and induces its multimerization. May serve as a chaperone for EsxA. In Thermomonospora curvata (strain ATCC 19995 / DSM 43183 / JCM 3096 / KCTC 9072 / NBRC 15933 / NCIMB 10081 / Henssen B9), this protein is ESAT-6-like protein.